The primary structure comprises 612 residues: MAGAAGPFLPGSAFWSRDFSDEDQSVAYVPGISTEGNTRSRVKLINPKVDVKVKASRVTDASVSMESLKGAGDSVAEQNFCKRGMKSASLKDLCLEDKRRIANLIKELARVSEEKEVTEERLKTEQESFEKKIRQLEEQNELIIKEREALQLQYRECQELLSLYQKYLSEQQEKLTLSLSELGAARAQEQQITKKKNTPQCSLMDLDGSFLSVARPQNYGQTKARPKSANQVSESFTELRNNSLRPITLHHPKEDLERMSTKTRTCTYESLGRRLINAAPIEKSLPVELKIKEYPNLPPTPSSQYCGHKCSESGAYVHENYHPTNMAPQCCKTHPESCSHCRIPWASQMHDRVILQPRETDIEKQLSEDRRQQLMLQKMELEIEKERLQHLLAQQETKLLLKQQQLHQSRLDYNWLRTQAMFKSRELVADKEFPKPDLDMNGSVSGPSLWKPKCDGWMRGTSTSFKKCPDSPNSGQNQREKKTVEFQSRVENGIQWTCQQNDICRPQRETVTGVRKDASTSPMSTRSPKEPLTPASLSSQHKTSRYETSLLDLVQSLSPNSAPKSQPHPSRAAGTWSTLRPTPQKSIWKKVGTRRSPEDLEENQILEDIFFI.

Phosphoserine is present on Ser20. The stretch at 90–166 forms a coiled coil; that stretch reads LKDLCLEDKR…CQELLSLYQK (77 aa). At Ser178 the chain carries Phosphoserine. The stretch at 362-406 forms a coiled coil; it reads IEKQLSEDRRQQLMLQKMELEIEKERLQHLLAQQETKLLLKQQQL. The segment covering 462–477 has biased composition (polar residues); the sequence is STSFKKCPDSPNSGQN. 2 disordered regions span residues 462–484 and 509–598; these read STSF…KKTV and ETVT…RSPE. Residues Ser471, Ser527, and Ser558 each carry the phosphoserine modification. Polar residues-rich tracts occupy residues 555-568 and 575-585; these read QSLS…SQPH and TWSTLRPTPQK.

Interacts (via N- and C-terminal domains) with SMC3 (via central hinge region).

In terms of biological role, competes with SMC1 for binding to SMC3. May affect the availability of SMC3 to engage in the formation of multimeric protein complexes. This Mus musculus (Mouse) protein is Protein hinderin (Kiaa1328).